The primary structure comprises 825 residues: Cell division cycle protein 27 homolog (825 aa).

TPR repeat units follow at residues 6–35 (EPVQ…YAEV), 38–65 (EEAL…KGHS), 67–99 (TTPQ…VFNK), and 115–145 (CFTL…LSLN). A phosphothreonine mark is found at threonine 205 and threonine 209. Residue serine 291 is modified to Phosphoserine. The disordered stretch occupies residues 306–423 (SVIDVAPTGA…TNKGGLTQPS (118 aa)). Threonine 313 is subject to Phosphothreonine. Residues 326–341 (QTGTKSVFSQSGNSRE) are compositionally biased toward polar residues. Residue serine 339 is modified to Phosphoserine. Positions 349–362 (QTQSSGPQTSTTPQ) are enriched in low complexity. The span at 363–372 (VLSPTITSPP) shows a compositional bias: polar residues. Threonine 367 carries the post-translational modification Phosphothreonine. A phosphoserine mark is found at serine 380 and serine 387. Positions 381 to 391 (RLFTSDSSTTK) are enriched in polar residues. The segment covering 396–414 (KLKMKFPPKIPNRKTKSKT) has biased composition (basic residues). Phosphoserine is present on serine 427. A Phosphothreonine modification is found at threonine 431. Serine 436 and serine 439 each carry phosphoserine. Residue threonine 447 is modified to Phosphothreonine. TPR repeat units follow at residues 465–495 (SLLR…LPSH), 499–528 (TGWV…EVRR), 533–563 (RVEG…LTDM), 567–598 (SPEA…IQVD), 601–631 (YAYA…AIRV), 635–667 (HYNA…DINP), 670–702 (SVLL…IDPK), 704–734 (PLCK…KQIV), and 737–768 (ESLV…MDLD). The segment at 782-825 (KRYLPDDEEPITQEEQIMGTDESQESSMTDADDTQLHAAESDEF) is disordered. A Phosphoserine modification is found at serine 822.

This sequence belongs to the APC3/CDC27 family. Homodimer. The mammalian APC/C is composed at least of 14 distinct subunits ANAPC1, ANAPC2, CDC27/APC3, ANAPC4, ANAPC5, CDC16/APC6, ANAPC7, CDC23/APC8, ANAPC10, ANAPC11, CDC26/APC12, ANAPC13, ANAPC15 and ANAPC16 that assemble into a complex of at least 19 chains with a combined molecular mass of around 1.2 MDa; APC/C interacts with FZR1 and FBXO5. Interacts with RB. Interacts with FAM168B/MANI. Interacts with MCPH1. In terms of processing, phosphorylated. Phosphorylation on Ser-427 and Thr-447 occurs specifically during mitosis.

Its subcellular location is the nucleus. The protein localises to the cytoplasm. It localises to the cytoskeleton. It is found in the spindle. It participates in protein modification; protein ubiquitination. In terms of biological role, component of the anaphase promoting complex/cyclosome (APC/C), a cell cycle-regulated E3 ubiquitin ligase that controls progression through mitosis and the G1 phase of the cell cycle. The APC/C complex acts by mediating ubiquitination and subsequent degradation of target proteins: it mainly mediates the formation of 'Lys-11'-linked polyubiquitin chains and, to a lower extent, the formation of 'Lys-48'- and 'Lys-63'-linked polyubiquitin chains. The APC/C complex catalyzes assembly of branched 'Lys-11'-/'Lys-48'-linked branched ubiquitin chains on target proteins. The sequence is that of Cell division cycle protein 27 homolog (Cdc27) from Mus musculus (Mouse).